Here is a 308-residue protein sequence, read N- to C-terminus: GTPase Era (308 aa).

One can recognise an Era-type G domain in the interval 14 to 181 (RCGFVALIGA…RRALAAAMPE (168 aa)). The tract at residues 22–29 (GAPNVGKS) is G1. 22 to 29 (GAPNVGKS) contributes to the GTP binding site. The G2 stretch occupies residues 48–52 (QTTRA). The tract at residues 69–72 (DTPG) is G3. Residues 69–73 (DTPGI) and 131–134 (NKID) each bind GTP. The segment at 131-134 (NKID) is G4. Residues 160-162 (VAA) are G5. A KH type-2 domain is found at 212–289 (LHQELPYQST…HLFLFVKVRD (78 aa)).

This sequence belongs to the TRAFAC class TrmE-Era-EngA-EngB-Septin-like GTPase superfamily. Era GTPase family. As to quaternary structure, monomer.

The protein resides in the cytoplasm. It localises to the cell inner membrane. Functionally, an essential GTPase that binds both GDP and GTP, with rapid nucleotide exchange. Plays a role in 16S rRNA processing and 30S ribosomal subunit biogenesis and possibly also in cell cycle regulation and energy metabolism. The protein is GTPase Era of Afipia carboxidovorans (strain ATCC 49405 / DSM 1227 / KCTC 32145 / OM5) (Oligotropha carboxidovorans).